Here is a 362-residue protein sequence, read N- to C-terminus: Ribosomal RNA large subunit methyltransferase F (362 aa).

Residues 1-28 show a composition bias toward basic residues; that stretch reads MNTPLKPKHGQKTNRKPKANKPVVKKQQ. Residues 1–40 form a disordered region; that stretch reads MNTPLKPKHGQKTNRKPKANKPVVKKQQTKQPPTHKVQGE.

It belongs to the methyltransferase superfamily. METTL16/RlmF family.

It is found in the cytoplasm. The catalysed reaction is adenosine(1618) in 23S rRNA + S-adenosyl-L-methionine = N(6)-methyladenosine(1618) in 23S rRNA + S-adenosyl-L-homocysteine + H(+). In terms of biological role, specifically methylates the adenine in position 1618 of 23S rRNA. This is Ribosomal RNA large subunit methyltransferase F from Vibrio cholerae serotype O1 (strain M66-2).